Consider the following 243-residue polypeptide: HTH-type transcriptional repressor NagR (243 aa).

The HTH gntR-type domain occupies 9 to 77 (IPIYYQIMEQ…KGRGTFVSKP (69 aa)). Positions 37–56 (EREYAEQFGISRMTVRQALS) form a DNA-binding region, H-T-H motif. Alpha-D-glucosamine 6-phosphate-binding positions include 89–90 (FT), 133–135 (RVR), glutamate 145, 165–167 (SIY), glutamate 222, and tyrosine 228. Residues 89–90 (FT), 133–135 (RVR), glutamate 145, 165–167 (SIY), glutamate 222, and tyrosine 228 contribute to the N-acetyl-D-glucosamine 6-phosphate site.

As to quaternary structure, homodimer. Forms dimers via the C-terminal effector-binding domain. At high concentrations, probably forms polymers along the DNA.

With respect to regulation, binding to DNA is allosterically inhibited by an effector molecule. Binding of the effector to the C-terminal domain leads to a conformational change that modulates binding to DNA and thereby regulates transcription of the target genes. Glucosamine-6-phosphate (GlcN6P) and/or N-acetylglucosamine-6-phosphate (GlcNAc6P) are putative effectors of NagR. Binding of GlcNAc6P may prevent the protein-protein interactions responsible for polymerization along the DNA, but not the specific DNA binding. In terms of biological role, main transcriptional repressor of genes involved in N-acetylglucosamine (GlcNAc) transport and utilization. Represses the expression of the nagAB and nagP operons by binding directly within their upstream regions. Binds to the DNA consensus sequence 5'-ATTGGTATAGACAACT-3'. Also acts as a weak repressor of mapB expression. This is HTH-type transcriptional repressor NagR from Bacillus subtilis (strain 168).